The sequence spans 223 residues: MPGDFSVCVCISPPPQPQFHCSPADSLRPCLVPTRRPPDPRKKNVVFADALGLALTSVRHFTRAFFDEEPLVLALASLRALRPLSSPTYTLDFSPPTQDYGRYREQLTRKLVCLEQCAVQGAAVAGTVRVRNVGYEKRVTLRVSYDGWCNHYDLPCTYLFDTRRGGDTDSFSFRMPLPVGTERAEFCICYWCAGEEYWDNNDGKNYSLHKEGKGKGYLQGPYW.

The region spanning 104 to 209 (REQLTRKLVC…NNDGKNYSLH (106 aa)) is the CBM21 domain.

In terms of assembly, interacts with PPP1CC catalytic subunit of PP1 and associates with glycogen. Forms complexes with glycogen phosphorylase, glycogen synthase and phosphorylase kinase which is necessary for its regulation of PP1 activity.

Acts as a glycogen-targeting subunit for PP1 and regulates its activity. Activates glycogen synthase, reduces glycogen phosphorylase activity and limits glycogen breakdown. This is Protein phosphatase 1 regulatory subunit 3C from Xenopus tropicalis (Western clawed frog).